Reading from the N-terminus, the 926-residue chain is Chitin synthase-like protein 2 (926 aa).

Positions 1–56 are disordered; it reads MSFQNPSYINAKHRSFLQPKDTQDSQDLRNWVSHSSVDEETAYSSSTLSSSSSKSF. The segment covering 44-55 has biased composition (low complexity); sequence SSSTLSSSSSKS. Transmembrane regions (helical) follow at residues 564 to 584, 599 to 619, 641 to 661, 671 to 691, 721 to 741, 853 to 873, and 885 to 905; these read INSSFSLAVYVIVDFFSLWTT, LVFAIEKLVNFFSMANFFLAF, LFLVFEYILICLIFSQFMLAM, LLFISTALFSIIMIYFVFCVF, LLILACYAFVSLICMDPFFIF, VLVWAVSNLILAIVLIQVFDG, and IFWSIVAFTAWKTMGAVTFIA.

The protein belongs to the chitin synthase family.

It is found in the membrane. Its function is as follows. Plays a role in septum formation. Has no chitin synthase activity. The polypeptide is Chitin synthase-like protein 2 (chs2) (Schizosaccharomyces pombe (strain 972 / ATCC 24843) (Fission yeast)).